The sequence spans 100 residues: Urease subunit gamma (100 aa).

Belongs to the urease gamma subunit family. In terms of assembly, heterotrimer of UreA (gamma), UreB (beta) and UreC (alpha) subunits. Three heterotrimers associate to form the active enzyme.

It localises to the cytoplasm. The catalysed reaction is urea + 2 H2O + H(+) = hydrogencarbonate + 2 NH4(+). It participates in nitrogen metabolism; urea degradation; CO(2) and NH(3) from urea (urease route): step 1/1. In terms of biological role, ureolysis may allow urea to be employed as a nitrogen source for growth and produces ammonia which may protect from killing at low pH. The sequence is that of Urease subunit gamma from Streptococcus salivarius (strain 57.I).